The chain runs to 208 residues: MVLDELISEFDRGLRSLTGISRMSRPVPVPTEPTVGELTPAERAHAAGLMRVNHVGEVCAQALYQAQKLTARSASSKAMFEEAAREEEDHLAWTAHRLKELDSRPSLLNPLWYAGALAIGVAAGTLGDKVSLGFMAETERQVESHLDGHLSELPATDTASRAIVEQMRVDEVKHGKAATDAGGIELPLPARMLMRAASKVMTRTAYYL.

Fe cation is bound by residues Glu-57, Glu-87, His-90, Glu-139, Glu-171, and His-174.

The protein belongs to the COQ7 family. Requires Fe cation as cofactor.

It localises to the cell membrane. It catalyses the reaction a 5-methoxy-2-methyl-3-(all-trans-polyprenyl)benzene-1,4-diol + AH2 + O2 = a 3-demethylubiquinol + A + H2O. It functions in the pathway cofactor biosynthesis; ubiquinone biosynthesis. Catalyzes the hydroxylation of 2-nonaprenyl-3-methyl-6-methoxy-1,4-benzoquinol during ubiquinone biosynthesis. In Burkholderia ambifaria (strain MC40-6), this protein is 3-demethoxyubiquinol 3-hydroxylase.